We begin with the raw amino-acid sequence, 131 residues long: Methylglyoxal synthase (131 aa).

The region spanning 1 to 131 (MKIALIAHDK…GDLDYRKLRK (131 aa)) is the MGS-like domain. Residues histidine 8, lysine 12, 34–37 (TGTT), and 54–55 (SG) contribute to the substrate site. The Proton donor/acceptor role is filled by aspartate 60. Residue histidine 87 participates in substrate binding.

The protein belongs to the methylglyoxal synthase family.

It catalyses the reaction dihydroxyacetone phosphate = methylglyoxal + phosphate. Catalyzes the formation of methylglyoxal from dihydroxyacetone phosphate. The sequence is that of Methylglyoxal synthase from Bacillus cereus (strain AH820).